The following is a 113-amino-acid chain: Large ribosomal subunit protein eL33 (113 aa).

This sequence belongs to the eukaryotic ribosomal protein eL33 family.

This is Large ribosomal subunit protein eL33 (RPL35A) from Tetrahymena thermophila (strain SB210).